We begin with the raw amino-acid sequence, 139 residues long: MRADREELDFLPPVGGMAVDVMEVELPATRRAFMLVLVQTAAVLAAIHGMHLMNELYLTSFDEKFQWKIEAWRLYLALYYVVCIGMTIFCLDGGHADEPSREASPDLGAAGAELEDESAQAGAVQGPETLRSQVLRART.

Positions 97 to 139 (DEPSREASPDLGAAGAELEDESAQAGAVQGPETLRSQVLRART) are disordered.

The chain is Probable DNA-binding protein from Homo sapiens (Human).